A 311-amino-acid chain; its full sequence is Pyrimidine-specific ribonucleoside hydrolase RihA (311 aa).

Residue histidine 240 is part of the active site.

This sequence belongs to the IUNH family. RihA subfamily.

Hydrolyzes with equal efficiency cytidine or uridine to ribose and cytosine or uracil, respectively. The sequence is that of Pyrimidine-specific ribonucleoside hydrolase RihA from Escherichia coli (strain SMS-3-5 / SECEC).